Reading from the N-terminus, the 370-residue chain is Aminomethyltransferase (370 aa).

It belongs to the GcvT family. In terms of assembly, the glycine cleavage system is composed of four proteins: P, T, L and H.

The catalysed reaction is N(6)-[(R)-S(8)-aminomethyldihydrolipoyl]-L-lysyl-[protein] + (6S)-5,6,7,8-tetrahydrofolate = N(6)-[(R)-dihydrolipoyl]-L-lysyl-[protein] + (6R)-5,10-methylene-5,6,7,8-tetrahydrofolate + NH4(+). Its function is as follows. The glycine cleavage system catalyzes the degradation of glycine. This is Aminomethyltransferase from Prochlorococcus marinus (strain MIT 9215).